The following is a 286-amino-acid chain: Phosphatidylserine decarboxylase proenzyme (286 aa).

Catalysis depends on charge relay system; for autoendoproteolytic cleavage activity residues Asp89, His146, and Ser252. The active-site Schiff-base intermediate with substrate; via pyruvic acid; for decarboxylase activity is Ser252. Residue Ser252 is modified to Pyruvic acid (Ser); by autocatalysis.

Belongs to the phosphatidylserine decarboxylase family. PSD-B subfamily. Prokaryotic type I sub-subfamily. Heterodimer of a large membrane-associated beta subunit and a small pyruvoyl-containing alpha subunit. Pyruvate serves as cofactor. Post-translationally, is synthesized initially as an inactive proenzyme. Formation of the active enzyme involves a self-maturation process in which the active site pyruvoyl group is generated from an internal serine residue via an autocatalytic post-translational modification. Two non-identical subunits are generated from the proenzyme in this reaction, and the pyruvate is formed at the N-terminus of the alpha chain, which is derived from the carboxyl end of the proenzyme. The autoendoproteolytic cleavage occurs by a canonical serine protease mechanism, in which the side chain hydroxyl group of the serine supplies its oxygen atom to form the C-terminus of the beta chain, while the remainder of the serine residue undergoes an oxidative deamination to produce ammonia and the pyruvoyl prosthetic group on the alpha chain. During this reaction, the Ser that is part of the protease active site of the proenzyme becomes the pyruvoyl prosthetic group, which constitutes an essential element of the active site of the mature decarboxylase.

It localises to the cell membrane. It carries out the reaction a 1,2-diacyl-sn-glycero-3-phospho-L-serine + H(+) = a 1,2-diacyl-sn-glycero-3-phosphoethanolamine + CO2. Its pathway is phospholipid metabolism; phosphatidylethanolamine biosynthesis; phosphatidylethanolamine from CDP-diacylglycerol: step 2/2. In terms of biological role, catalyzes the formation of phosphatidylethanolamine (PtdEtn) from phosphatidylserine (PtdSer). The protein is Phosphatidylserine decarboxylase proenzyme of Shewanella loihica (strain ATCC BAA-1088 / PV-4).